The chain runs to 592 residues: Calnexin (592 aa).

Positions M1–A20 are cleaved as a signal peptide. The Lumenal portion of the chain corresponds to H21–P481. 2 residues coordinate Ca(2+): S74 and D117. N6-acetyllysine is present on K137. Cysteines 160 and 194 form a disulfide. The an alpha-D-glucoside site is built by Y164, K166, Y185, and D192. Residues G260–D345 are disordered. Residues R274–K319 are compositionally biased toward basic and acidic residues. The p domain (Extended arm) stretch occupies residues I276 to E409. A run of 5 repeats spans residues D278–R290, D295–D307, D314–D326, D333–D345, and G348–P358. 4 X approximate repeats stretches follow at residues D278–D345 and G348–P405. Acidic residues predominate over residues W323 to D345. Residues D326–R359 are interaction with PPIB. Cysteines 360 and 366 form a disulfide. 3 consecutive repeat copies span residues G367–P377, G381–P391, and G395–P405. Residue E425 participates in an alpha-D-glucoside binding. A Ca(2+)-binding site is contributed by D436. Residues W482 to C502 traverse the membrane as a helical segment. 2 S-palmitoyl cysteine lipidation sites follow: C502 and C503. The Cytoplasmic segment spans residues C503–E592. The segment at C503–E592 is sufficient to mediate interaction with SGIP1. A disordered region spans residues G511–E592. The span at K525 to K547 shows a compositional bias: acidic residues. A Phosphoserine modification is found at S554. T562 carries the phosphothreonine modification. S564 is subject to Phosphoserine; by MAPK3. Position 583 is a phosphoserine (S583).

It belongs to the calreticulin family. In terms of assembly, interacts with MAPK3/ERK1. Interacts with KCNH2. Associates with ribosomes. Interacts with SGIP1; involved in negative regulation of endocytosis. The palmitoylated form interacts with the ribosome-translocon complex component SSR1, promoting efficient folding of glycoproteins. Interacts with SERPINA2P/SERPINA2 and with the S and Z variants of SERPINA1. Interacts with PPIB. Interacts with ZNRF4. Interacts with SMIM22. Interacts with TMX2. Interacts with TMEM35A/NACHO. Interacts with CHRNA7. Interacts with reticulophagy regulators RETREG2 and RETREG3. Interacts with DNM1L; may form part of a larger protein complex at the ER-mitochondrial interface during mitochondrial fission. Interacts with ADAM7. (Microbial infection) Interacts with HBV large envelope protein, isoform L. As to quaternary structure, (Microbial infection) Interacts with HBV large envelope protein, isoform M; this association may be essential for isoform M proper secretion. Phosphorylated at Ser-564 by MAPK3/ERK1. Phosphorylation by MAPK3/ERK1 increases its association with ribosomes. Post-translationally, palmitoylation by DHHC6 leads to the preferential localization to the perinuclear rough ER. It mediates the association of calnexin with the ribosome-translocon complex (RTC) which is required for efficient folding of glycosylated proteins. In terms of processing, ubiquitinated, leading to proteasomal degradation. Probably ubiquitinated by ZNRF4.

It localises to the endoplasmic reticulum membrane. The protein localises to the mitochondrion membrane. It is found in the melanosome membrane. In terms of biological role, calcium-binding protein that interacts with newly synthesized monoglucosylated glycoproteins in the endoplasmic reticulum. It may act in assisting protein assembly and/or in the retention within the ER of unassembled protein subunits. It seems to play a major role in the quality control apparatus of the ER by the retention of incorrectly folded proteins. Associated with partial T-cell antigen receptor complexes that escape the ER of immature thymocytes, it may function as a signaling complex regulating thymocyte maturation. Additionally it may play a role in receptor-mediated endocytosis at the synapse. The chain is Calnexin (CANX) from Homo sapiens (Human).